The chain runs to 64 residues: Large ribosomal subunit protein bL33 (64 aa).

It belongs to the bacterial ribosomal protein bL33 family.

This chain is Large ribosomal subunit protein bL33, found in Parasynechococcus marenigrum (strain WH8102).